Consider the following 273-residue polypeptide: Large ribosomal subunit protein uL2cz/uL2cy (273 aa).

2 disordered regions span residues 1–22 and 225–273; these read MAKHLYKTPIPSTRKGTVDRQV and PVDH…RRRK.

Belongs to the universal ribosomal protein uL2 family. Part of the 50S ribosomal subunit.

Its subcellular location is the plastid. It localises to the chloroplast. This is Large ribosomal subunit protein uL2cz/uL2cy (rpl2-A) from Saccharum hybrid (Sugarcane).